The sequence spans 1684 residues: A-kinase anchor protein 12 (1684 aa).

Positions 1–124 (MGAGSSTEQR…DITKDEQEET (124 aa)) are disordered. Residue G2 is the site of N-myristoyl glycine attachment. S11, S18, S22, and S27 each carry phosphoserine. The span at 30 to 48 (GPAAEASGAAGDPADADPA) shows a compositional bias: low complexity. Residues 75 to 86 (ESQDGQEEEVTV) show a composition bias toward acidic residues. The span at 89-105 (VGQRESEDVKEKDRAKE) shows a compositional bias: basic and acidic residues. Position 136 is a phosphoserine (S136). 2 disordered regions span residues 175-281 (SDTV…ETTS) and 296-353 (KKTS…SADY). A compositionally biased stretch (basic and acidic residues) spans 212-227 (ASKESELKQSTEKQEG). Residues 228 to 247 (TLKQAQSSTEIPLQAESGQG) show a composition bias toward polar residues. 2 positions are modified to phosphoserine: S234 and S244. Residues 251 to 266 (EAAKDGEENREKEPTK) are compositionally biased toward basic and acidic residues. The interval 253 to 543 (AKDGEENREK…QHIQTESPES (291 aa)) is involved in PKC-binding. 2 positions are modified to phosphoserine: S270 and S273. Polar residues predominate over residues 270–281 (SPTSPVSNETTS). The segment covering 302–320 (KPKEDDLETSEKRKEQEAE) has biased composition (basic and acidic residues). Positions 321–342 (KVDEEEGEKTEPAPAEEQEPAE) are enriched in acidic residues. T330 carries the post-translational modification Phosphothreonine. At S350 the chain carries Phosphoserine. At Y353 the chain carries Phosphotyrosine. S371 and S467 each carry phosphoserine. The disordered stretch occupies residues 421 to 479 (GSGESLPPEKLAETQEVPQEAEPVEELMKTKEVCVSGGDHTQLTDLSPEEKMLPKHPEG). Residues 468–478 (PEEKMLPKHPE) show a composition bias toward basic and acidic residues. 3 positions are modified to phosphoserine: S489, S505, and S507. Residues 492–825 (RIKVQGSPLK…INEDDPDVPA (334 aa)) are disordered. Positions 497–511 (GSPLKKLFSSSGLKK) are enriched in low complexity. Positions 512–521 (LSGKKQKGKR) are enriched in basic residues. Phosphoserine is present on residues S540, S543, S584, S598, S613, and S615. The AKAP CaM-binding 1 motif lies at 593–613 (ITPWASFKKMVTPKKRVRRPS). The span at 611-625 (RPSESDKEEELDKVK) shows a compositional bias: basic and acidic residues. Residues 626–637 (SATLSSTESTAS) are compositionally biased toward low complexity. T628 carries the post-translational modification Phosphothreonine. Phosphoserine is present on residues S630, S631, S634, and S637. The segment covering 641-660 (DEVRAVGEEQRSEEPKRRVD) has biased composition (basic and acidic residues). Phosphoserine occurs at positions 682, 683, and 684. A compositionally biased stretch (basic and acidic residues) spans 696–710 (DGHRAEEASKDKEAD). Positions 714 to 723 (ASTQEQDQAH) are enriched in polar residues. A compositionally biased stretch (low complexity) spans 724 to 741 (GSSSPEPAGSPSEGEGVS). Phosphoserine is present on residues S733, S745, S767, and S786. The AKAP CaM-binding 2 signature appears at 740–760 (VSTWESFKRLVTPRKKSKSKL). Positions 781-801 (EESWVSIKKFIPGRRKKRADG) match the AKAP CaM-binding 3 motif. Position 871 is a phosphothreonine (T871). S873 carries the post-translational modification Phosphoserine. Residues 970-1001 (TEASGAEETTDMVSAVSQLSDSPDTTEEATPV) are disordered. Residues 980-992 (DMVSAVSQLSDSP) show a composition bias toward polar residues. K1030 participates in a covalent cross-link: Glycyl lysine isopeptide (Lys-Gly) (interchain with G-Cter in SUMO1). Disordered regions lie at residues 1055-1106 (VEED…VTED), 1121-1211 (LMEQ…DVLE), 1232-1365 (EGEA…DKAD), and 1391-1492 (TVAT…REKI). A Phosphoserine modification is found at S1059. Polar residues predominate over residues 1130–1176 (SSETLTDSETNGSTPLADSDTPNGTQQDETVDSQDSNAIAAVKQSQV). 2 stretches are compositionally biased toward basic and acidic residues: residues 1198-1210 (QEEHREKPGRDVL) and 1239-1254 (DGEKVKDGQCVKELEV). A Phosphoserine modification is found at S1292. Basic and acidic residues predominate over residues 1293-1331 (PEKREMGTDVEKEETETKTEQASEEHEQETAAPEHEGTH). A phosphoserine mark is found at S1351, S1355, and S1357. The span at 1467–1492 (QRSDEDNKPDAGPDAAGKESAAREKI) shows a compositional bias: basic and acidic residues. Residues 1501–1514 (ELESKSNKIVQSVI) are RII-binding. Residues S1546 and S1645 each carry the phosphoserine modification. The interval 1568–1684 (TLSAVAQEGL…QEPKGDLTES (117 aa)) is disordered. The span at 1653 to 1684 (LTEEGDALKEEMNKAQTEEDDLQEPKGDLTES) shows a compositional bias: basic and acidic residues.

In terms of assembly, binds to dimeric RII-alpha regulatory subunit of PKC. In terms of tissue distribution, isoform 1 is predominantly found in the nervous system. Isoform 3 is testis specific.

The protein resides in the cytoplasm. Its subcellular location is the cytoskeleton. It is found in the membrane. Functionally, anchoring protein that mediates the subcellular compartmentation of protein kinase A (PKA) and protein kinase C (PKC). The polypeptide is A-kinase anchor protein 12 (Akap12) (Mus musculus (Mouse)).